Reading from the N-terminus, the 1270-residue chain is Activating transcription factor 7-interacting protein 1 (1270 aa).

Met1 is subject to N-acetylmethionine. Lys33 participates in a covalent cross-link: Glycyl lysine isopeptide (Lys-Gly) (interchain with G-Cter in SUMO2). A phosphoserine mark is found at Ser57 and Ser113. Disordered stretches follow at residues 104–223 (DDDL…ISGD) and 235–402 (TSVD…EDET). Phosphothreonine is present on Thr118. 2 stretches are compositionally biased toward low complexity: residues 132-203 (GDPA…SSGD) and 248-269 (DPAS…SDDL). Composition is skewed to basic and acidic residues over residues 310-327 (SNKD…EKLE) and 333-343 (DSLDEKNKADN). The segment covering 347 to 356 (ANEETLETDD) has biased composition (acidic residues). Positions 363 to 373 (RPPENEKKVEE) are enriched in basic and acidic residues. Ser445, Ser473, Ser474, Ser477, Ser479, and Ser496 each carry phosphoserine. Disordered stretches follow at residues 455 to 570 (TSLL…SKRR), 658 to 685 (EDLK…NSNN), 822 to 862 (PPTV…PTAS), and 886 to 906 (RTSL…NRGP). Polar residues predominate over residues 474–486 (SFGSPSKQESSES). The span at 496-509 (SDEEDISGEKDESE) shows a compositional bias: acidic residues. Basic and acidic residues predominate over residues 524–552 (SNEKDNKPEEEEQVIHEDDERPSEKNEFS). A Nuclear localization signal motif is present at residues 553–571 (RRKRSKSEDMDNVQSKRRR). Lys558 is covalently cross-linked (Glycyl lysine isopeptide (Lys-Gly) (interchain with G-Cter in SUMO2)). Ser559 is subject to Phosphoserine. The interaction with SETDB1 stretch occupies residues 562 to 817 (MDNVQSKRRR…NQPSGNVEFI (256 aa)). Positions 617 to 665 (KTLAELKTRVEKIECNKRHKTVLTELQAKIARLTKRFEAAKEDLKKRHE) form a coiled coil. The residue at position 673 (Ser673) is a Phosphoserine. The span at 822–834 (PPTVSGLTKNPVS) shows a compositional bias: polar residues. Residues 843–854 (KPNNVPSVPSPS) show a composition bias toward low complexity. A Phosphoserine modification is found at Ser899. Glycyl lysine isopeptide (Lys-Gly) (interchain with G-Cter in SUMO2) cross-links involve residues Lys910 and Lys938. 2 stretches are compositionally biased toward polar residues: residues 918 to 942 (TSSA…TIDA) and 950 to 964 (DSTS…SDSS). 2 disordered regions span residues 918 to 1026 (TSSA…SQTT) and 1115 to 1160 (STGP…STSL). The tract at residues 965–975 (GVIDLTMDDEE) is interaction with SUMO. Polar residues-rich tracts occupy residues 988–999 (TPVSTMSSSQPV) and 1016–1026 (GVPTSGPSQTT). A compositionally biased stretch (pro residues) spans 1134–1151 (PRPVHPAPLPEAPQPQRL). Residues 1154–1270 (EAASTSLPQK…TDVISSTQSS (117 aa)) form an interaction with MBD1 region. Positions 1160–1270 (LPQKPHLKLA…TDVISSTQSS (111 aa)) constitute a Fibronectin type-III domain.

Belongs to the MCAF family. As to quaternary structure, interacts with MBD1; the interaction is enhanced when MBD1 is sumoylated. Interacts with SETDB1; the interaction protects SETDB1 from proteasomal degradation and is required to stimulate histone methyltransferase activity and facilitate the conversion of dimethylated to trimethylated H3 'Lys-9'. Interacts with SUMO ubiquitin-like proteins (SUMO1, SUNO2 and SUMO3), with a preference for SUMO2 and SUMO3. Interacts with SP1, ATF7 and ZHX1. Interacts with the general transcription machinery, including ERCC2, ERCC3, GTF2E1, GTF2E2 and POLR2A. In terms of assembly, (Microbial infection) Interacts with Epstein-Barr virus BRLF1/Rta protein, leading to the regulation of host genes in Epstein-Barr virus-infected cells. Detected at low levels in breast, lung and stomach; highly up-regulated in the corresponding cancerous tissues (at protein level).

Its subcellular location is the nucleus. Its function is as follows. Recruiter that couples transcriptional factors to general transcription apparatus and thereby modulates transcription regulation and chromatin formation. Can both act as an activator or a repressor depending on the context. Required for HUSH-mediated heterochromatin formation and gene silencing. Mediates MBD1-dependent transcriptional repression, probably by recruiting complexes containing SETDB1. Stabilizes SETDB1, is required to stimulate histone methyltransferase activity of SETDB1 and facilitates the conversion of dimethylated to trimethylated H3 'Lys-9' (H3K9me3). The complex formed with MBD1 and SETDB1 represses transcription and couples DNA methylation and histone H3 'Lys-9' trimethylation (H3K9me3). Facilitates telomerase TERT and TERC gene expression by SP1 in cancer cells. The protein is Activating transcription factor 7-interacting protein 1 of Homo sapiens (Human).